A 685-amino-acid chain; its full sequence is DNA ligase (685 aa).

NAD(+) contacts are provided by residues 48–52 (DAEYD), 97–98 (SL), and glutamate 131. Residue lysine 133 is the N6-AMP-lysine intermediate of the active site. NAD(+)-binding residues include arginine 154, glutamate 190, lysine 304, and lysine 328. Cysteine 422, cysteine 425, cysteine 440, and cysteine 445 together coordinate Zn(2+). Residues 603–685 (PEEGPLSGRR…RLLSGEERPG (83 aa)) enclose the BRCT domain.

The protein belongs to the NAD-dependent DNA ligase family. LigA subfamily. Mg(2+) is required as a cofactor. It depends on Mn(2+) as a cofactor.

It catalyses the reaction NAD(+) + (deoxyribonucleotide)n-3'-hydroxyl + 5'-phospho-(deoxyribonucleotide)m = (deoxyribonucleotide)n+m + AMP + beta-nicotinamide D-nucleotide.. DNA ligase that catalyzes the formation of phosphodiester linkages between 5'-phosphoryl and 3'-hydroxyl groups in double-stranded DNA using NAD as a coenzyme and as the energy source for the reaction. It is essential for DNA replication and repair of damaged DNA. The polypeptide is DNA ligase (Rubrobacter xylanophilus (strain DSM 9941 / JCM 11954 / NBRC 16129 / PRD-1)).